The chain runs to 268 residues: HLA class II histocompatibility antigen, DQ beta 2 chain (268 aa).

A signal peptide spans 1-32; it reads MSWKMALQIPGGFWAAAVTVMLVMLSTPVAEA. The interval 33 to 126 is beta-1; the sequence is RDFPKDFLVQ…ELRTTLQRQV (94 aa). At 33–229 the chain is on the extracellular side; the sequence is RDFPKDFLVQ…RAQSESAQSK (197 aa). Cystine bridges form between Cys-47–Cys-110 and Cys-148–Cys-204. The N-linked (GlcNAc...) asparagine glycan is linked to Asn-51. The tract at residues 127–229 is beta-2; it reads EPTVTISPSR…RAQSESAQSK (103 aa). In terms of domain architecture, Ig-like C1-type spans 128-216; the sequence is PTVTISPSRT…EHPSLQSPIT (89 aa). The helical transmembrane segment at 230–250 threads the bilayer; that stretch reads MLSGIGGFVLGLIFLGLGLII. At 251–268 the chain is on the cytoplasmic side; sequence RHRGQKGPRGPPPAGLLH.

Belongs to the MHC class II family. Heterodimer of an alpha and a beta subunit; also referred as MHC class II molecule. Dimer formation with HLA-DQA2, but not with HLA-DQA1, is required for efficient exit from the endoplasmic reticulum (ER). In the ER, forms a heterononamer; 3 MHC class II molecules bind to a CD74 homotrimer (also known as invariant chain or HLA class II histocompatibility antigen gamma chain). In the endosomal/lysosomal system; CD74 undergoes sequential degradation by various proteases; leaving a small fragment termed CLIP on each MHC class II molecule. MHC class II molecule interacts with HLA_DM, and HLA_DO in B-cells, in order to release CLIP and facilitate the binding of antigenic peptides. Association with HLA-DMA also occurs in skin Langerhans cells, in post-Golgi compartments. As to expression, restricted to skin Langerhans cells (at protein level).

It is found in the cell membrane. Its subcellular location is the endoplasmic reticulum membrane. It localises to the golgi apparatus. The protein localises to the trans-Golgi network membrane. The protein resides in the endosome membrane. It is found in the lysosome membrane. Its function is as follows. Binds peptides derived from antigens that access the endocytic route of antigen presenting cells (APC) and presents them on the cell surface for recognition by the CD4 T-cells. The peptide binding cleft accommodates peptides of 10-30 residues. The peptides presented by MHC class II molecules are generated mostly by degradation of proteins that access the endocytic route, where they are processed by lysosomal proteases and other hydrolases. Exogenous antigens that have been endocytosed by the APC are thus readily available for presentation via MHC II molecules, and for this reason this antigen presentation pathway is usually referred to as exogenous. As membrane proteins on their way to degradation in lysosomes as part of their normal turn-over are also contained in the endosomal/lysosomal compartments, exogenous antigens must compete with those derived from endogenous components. Autophagy is also a source of endogenous peptides, autophagosomes constitutively fuse with MHC class II loading compartments. In addition to APCs, other cells of the gastrointestinal tract, such as epithelial cells, express MHC class II molecules and CD74 and act as APCs, which is an unusual trait of the GI tract. To produce a MHC class II molecule that presents an antigen, three MHC class II molecules (heterodimers of an alpha and a beta chain) associate with a CD74 trimer in the ER to form a heterononamer. Soon after the entry of this complex into the endosomal/lysosomal system where antigen processing occurs, CD74 undergoes a sequential degradation by various proteases, including CTSS and CTSL, leaving a small fragment termed CLIP (class-II-associated invariant chain peptide). The removal of CLIP is facilitated by HLA-DM via direct binding to the alpha-beta-CLIP complex so that CLIP is released. HLA-DM stabilizes MHC class II molecules until primary high affinity antigenic peptides are bound. The MHC II molecule bound to a peptide is then transported to the cell membrane surface. In B-cells, the interaction between HLA-DM and MHC class II molecules is regulated by HLA-DO. Primary dendritic cells (DCs) also to express HLA-DO. Lysosomal microenvironment has been implicated in the regulation of antigen loading into MHC II molecules, increased acidification produces increased proteolysis and efficient peptide loading. In Homo sapiens (Human), this protein is HLA class II histocompatibility antigen, DQ beta 2 chain (HLA-DQB2).